Consider the following 500-residue polypeptide: Glycerol kinase (500 aa).

Threonine 14 contacts ADP. Residues threonine 14, threonine 15, and serine 16 each contribute to the ATP site. Threonine 14 contacts sn-glycerol 3-phosphate. Arginine 18 contacts ADP. Arginine 84, glutamate 85, and tyrosine 136 together coordinate sn-glycerol 3-phosphate. Positions 84, 85, and 136 each coordinate glycerol. The residue at position 232 (histidine 232) is a Phosphohistidine; by HPr. Aspartate 246 lines the sn-glycerol 3-phosphate pocket. Glycerol is bound by residues aspartate 246 and glutamine 247. Threonine 268 and glycine 311 together coordinate ADP. Residues threonine 268, glycine 311, glutamine 315, and glycine 412 each contribute to the ATP site. ADP-binding residues include glycine 412 and asparagine 416.

It belongs to the FGGY kinase family. Homotetramer and homodimer (in equilibrium). The phosphoenolpyruvate-dependent sugar phosphotransferase system (PTS), including enzyme I, and histidine-containing protein (HPr) are required for the phosphorylation, which leads to the activation of the enzyme.

The enzyme catalyses glycerol + ATP = sn-glycerol 3-phosphate + ADP + H(+). Its pathway is polyol metabolism; glycerol degradation via glycerol kinase pathway; sn-glycerol 3-phosphate from glycerol: step 1/1. Its activity is regulated as follows. Activated by phosphorylation and inhibited by fructose 1,6-bisphosphate (FBP). Key enzyme in the regulation of glycerol uptake and metabolism. Catalyzes the phosphorylation of glycerol to yield sn-glycerol 3-phosphate. This chain is Glycerol kinase, found in Streptococcus uberis (strain ATCC BAA-854 / 0140J).